Reading from the N-terminus, the 563-residue chain is Pentatricopeptide repeat-containing protein At4g39620, chloroplastic (563 aa).

Residues 1–47 (MDYLLTSPSSLRFSDFISSIPKETDHKWLRFSVNLGDARRSTRTRIT) constitute a chloroplast transit peptide. 9 PPR repeats span residues 132–166 (DNGV…GCRP), 167–197 (DASV…YLDK), 207–241 (NVVT…PVSP), 242–276 (DVYT…ECKP), 277–311 (DIIT…KEKP), 312–346 (TLPT…NYIP), 347–381 (SFIT…DRVL), 382–416 (KAST…RVHP), and 417–451 (DAST…GIVP). 2 disordered regions span residues 468 to 501 (PGSG…FQDK) and 520 to 551 (NLSG…NNMM). Positions 520-537 (NLSGHDKGSRDESRKPSQ) are enriched in basic and acidic residues.

This sequence belongs to the PPR family. P subfamily.

The protein localises to the plastid. It localises to the chloroplast. Its function is as follows. Essential for embryo development. This chain is Pentatricopeptide repeat-containing protein At4g39620, chloroplastic, found in Arabidopsis thaliana (Mouse-ear cress).